A 277-amino-acid chain; its full sequence is Undecaprenyl-diphosphatase 2 (277 aa).

6 consecutive transmembrane segments (helical) span residues 43–63 (RAMA…VWEF), 87–107 (LLIA…TIHE), 109–129 (LFNP…MLWA), 183–203 (AATE…AVYS), 214–234 (SDLP…MIAV), and 254–274 (IAFG…WTAA).

The protein belongs to the UppP family.

The protein resides in the cell inner membrane. The enzyme catalyses di-trans,octa-cis-undecaprenyl diphosphate + H2O = di-trans,octa-cis-undecaprenyl phosphate + phosphate + H(+). In terms of biological role, catalyzes the dephosphorylation of undecaprenyl diphosphate (UPP). Confers resistance to bacitracin. The protein is Undecaprenyl-diphosphatase 2 of Pseudomonas fluorescens (strain Pf0-1).